The primary structure comprises 190 residues: Translation initiation factor IF-3 (190 aa).

This sequence belongs to the IF-3 family. As to quaternary structure, monomer.

It is found in the cytoplasm. Its function is as follows. IF-3 binds to the 30S ribosomal subunit and shifts the equilibrium between 70S ribosomes and their 50S and 30S subunits in favor of the free subunits, thus enhancing the availability of 30S subunits on which protein synthesis initiation begins. This is Translation initiation factor IF-3 from Prochlorococcus marinus (strain MIT 9312).